A 165-amino-acid chain; its full sequence is Glycine cleavage system H protein, mitochondrial (165 aa).

A mitochondrion-targeting transit peptide spans 1-34 (MALRMWASSTANALKLSSSSRLHLSPTFSISRCF). The Lipoyl-binding domain occupies 56 to 138 (VATIGITDHA…YEDGWMIKIK (83 aa)). Lys-97 bears the N6-lipoyllysine mark.

The protein belongs to the GcvH family. As to quaternary structure, the glycine cleavage system is composed of four proteins: P, T, L and H. The cofactor is (R)-lipoate.

Its subcellular location is the mitochondrion. In terms of biological role, the glycine cleavage system catalyzes the degradation of glycine. The H protein shuttles the methylamine group of glycine from the P protein to the T protein. This chain is Glycine cleavage system H protein, mitochondrial (GDCSH), found in Pisum sativum (Garden pea).